The chain runs to 369 residues: Translocating chain-associated membrane protein 1-like 1 (369 aa).

Over 1 to 29 the chain is Cytoplasmic; sequence MGLRKKSTKNPPVLSQEFILQNHADIVSC. Residues 30 to 50 form a helical membrane-spanning segment; sequence VGMFFLLGLVFEGTAEASIVF. The Lumenal portion of the chain corresponds to 51 to 81; sequence LTLQHSVAVPAAEEQATGSKSLYYYGVKDLA. Residues 82–102 form a helical membrane-spanning segment; that stretch reads TVFFYMLVAIIIHATIQEYVL. Over 103 to 121 the chain is Cytoplasmic; that stretch reads DKINKRMQFTKAKQNKFNE. The 210-residue stretch at 117–326 folds into the TLC domain; sequence NKFNESGQFS…TLWLQRWVED (210 aa). A helical membrane pass occupies residues 122 to 142; that stretch reads SGQFSVFYFFSCIWGTFILIS. The Lumenal segment spans residues 143-164; that stretch reads ENCLSDPTLIWKARPHSMMTFQ. The helical transmembrane segment at 165 to 185 threads the bilayer; it reads MKFFYISQLAYWFHAFPELYF. Residues 186 to 196 lie on the Cytoplasmic side of the membrane; it reads QKTKKQDIPRQ. A helical membrane pass occupies residues 197 to 215; the sequence is LVYIGLHLFHITGAYLLYL. Topologically, residues 216-219 are lumenal; that stretch reads NHLG. A helical membrane pass occupies residues 220 to 242; that stretch reads LLLLVLHYFVELLSHMCGLFYFS. Topologically, residues 243–249 are cytoplasmic; sequence DEKYQKG. The helical transmembrane segment at 250 to 270 threads the bilayer; sequence ISLWAIVFILGRLVTLIVSVL. Topologically, residues 271–297 are lumenal; it reads TVGFHLAGSQNRNPDALTGNVNVLAAK. Residues 298-318 traverse the membrane as a helical segment; sequence IAVLSSSCTIQAYVTWNLITL. At 319 to 369 the chain is on the cytoplasmic side; that stretch reads WLQRWVEDSNIQASCMKKKRSRSSKKRTENGVGVETSNRVDCPPKRKEKSS. A disordered region spans residues 335–369; it reads KKKRSRSSKKRTENGVGVETSNRVDCPPKRKEKSS. Residues 360-369 show a composition bias toward basic and acidic residues; it reads CPPKRKEKSS.

This sequence belongs to the TRAM family.

It is found in the endoplasmic reticulum membrane. Its function is as follows. Stimulatory or required for the translocation of secretory proteins across the ER membrane. The protein is Translocating chain-associated membrane protein 1-like 1 (TRAM1L1) of Homo sapiens (Human).